The chain runs to 239 residues: Small ribosomal subunit protein uS3 (239 aa).

One can recognise a KH type-2 domain in the interval 39–107 (VRQVLRKKMS…SVHINVIEVR (69 aa)). Positions 217–239 (KQDDISRGDRNADRSSRRSREVR) are disordered.

This sequence belongs to the universal ribosomal protein uS3 family. In terms of assembly, part of the 30S ribosomal subunit. Forms a tight complex with proteins S10 and S14.

In terms of biological role, binds the lower part of the 30S subunit head. Binds mRNA in the 70S ribosome, positioning it for translation. The sequence is that of Small ribosomal subunit protein uS3 from Xylella fastidiosa (strain 9a5c).